Reading from the N-terminus, the 126-residue chain is Holo-[acyl-carrier-protein] synthase (126 aa).

Positions 9 and 58 each coordinate Mg(2+).

Belongs to the P-Pant transferase superfamily. AcpS family. Requires Mg(2+) as cofactor.

Its subcellular location is the cytoplasm. The enzyme catalyses apo-[ACP] + CoA = holo-[ACP] + adenosine 3',5'-bisphosphate + H(+). Its function is as follows. Transfers the 4'-phosphopantetheine moiety from coenzyme A to a Ser of acyl-carrier-protein. The polypeptide is Holo-[acyl-carrier-protein] synthase (Salmonella choleraesuis (strain SC-B67)).